Here is a 698-residue protein sequence, read N- to C-terminus: Potassium-transporting ATPase ATP-binding subunit (698 aa).

Transmembrane regions (helical) follow at residues 56-76, 82-102, 240-260, and 271-291; these read IMFVVEIGFFITLLLSVVPSL, LWFNITVTLVLLFTVFFANFA, TVLISLTLIFLIAVVTLPLFT, and ILVALLVCLIPTTIGGLLSAI. Residue Asp324 is the 4-aspartylphosphate intermediate of the active site. Residues Asp361, Glu365, 393-400, and Lys412 each bind ATP; that span reads FKAETRMS. Mg(2+)-binding residues include Asp535 and Asp539. Helical transmembrane passes span 605-625, 633-653, and 677-697; these read FAIIPAMFTVAIPQMEALNIM, AILSALIFNALIIPMLIPLAM, and GGVLVPFIGIKLVDLVVGLFI.

The protein belongs to the cation transport ATPase (P-type) (TC 3.A.3) family. Type IA subfamily. As to quaternary structure, the system is composed of three essential subunits: KdpA, KdpB and KdpC.

It localises to the cell membrane. The catalysed reaction is K(+)(out) + ATP + H2O = K(+)(in) + ADP + phosphate + H(+). In terms of biological role, part of the high-affinity ATP-driven potassium transport (or Kdp) system, which catalyzes the hydrolysis of ATP coupled with the electrogenic transport of potassium into the cytoplasm. This subunit is responsible for energy coupling to the transport system and for the release of the potassium ions to the cytoplasm. The protein is Potassium-transporting ATPase ATP-binding subunit of Bacillus cytotoxicus (strain DSM 22905 / CIP 110041 / 391-98 / NVH 391-98).